Here is a 504-residue protein sequence, read N- to C-terminus: Cytochrome P450 4A24 (504 aa).

Helical transmembrane passes span 6 to 26 and 112 to 132; these read LASA…LLLL and VVYR…NGQT. Cysteine 451 contacts heme.

It belongs to the cytochrome P450 family. Heme is required as a cofactor.

Its subcellular location is the endoplasmic reticulum membrane. The catalysed reaction is an omega-methyl-long-chain fatty acid + reduced [NADPH--hemoprotein reductase] + O2 = an omega-hydroxy-long-chain fatty acid + oxidized [NADPH--hemoprotein reductase] + H2O + H(+). In terms of biological role, catalyzes the omega- and (omega-1)-hydroxylation of various fatty acids such as laurate and palmitate. Has no activity toward taurochenodeoxycholic acid. The chain is Cytochrome P450 4A24 (CYP4A24) from Sus scrofa (Pig).